A 688-amino-acid chain; its full sequence is Protein SDA1 homolog (688 aa).

Residues serine 232, serine 234, and serine 236 each carry the phosphoserine modification. Residues 254–318 (KKSSKNKKKL…ERFEVKMMLM (65 aa)) adopt a coiled-coil conformation. A compositionally biased stretch (acidic residues) spans 484–498 (VENEEENAEGDEDGW). Positions 484 to 524 (VENEEENAEGDEDGWESASLSDEADSDGEWVDVHHSSDEEQ) are disordered. A compositionally biased stretch (basic and acidic residues) spans 514–524 (VDVHHSSDEEQ). Phosphoserine occurs at positions 586 and 596. The interval 605-688 (KKPKSDKETR…ALLKKRKRMK (84 aa)) is disordered. Residues 668–681 (SFREKQLALRDALL) are compositionally biased toward basic and acidic residues.

Belongs to the SDA1 family.

The protein localises to the nucleus. It localises to the nucleolus. Required for 60S pre-ribosomal subunits export to the cytoplasm. This Bos taurus (Bovine) protein is Protein SDA1 homolog (SDAD1).